The following is a 421-amino-acid chain: MSSKSSLELANNAVKSNDIEKAIDLYKEVLNKGVSKDEKVANEQEQALTNLSDLYVRENRHNDLAQLVQQSRPLMANFSKAKSAKIVRTLIDKFSGEKKSLPLQIEVANDCIKWAIKEKRTFLRQALETKLISLYYDNSSYTDAINLINTLLSELKRMDDKMLLTEVHLLESKVYHAIRNIPKARASLTAAKTSANAVYCPPMLQGNLDLQSGILHADDMDFKTAYSYFYEAYEGFTSLDDDKKALSSLKYMLLSQIMLNSVSEVKSLLTGKHAIRYAGRDIEAMRAIAQAHENRSLADFEKALQDYKPELASDPIIRSHLSSLYDNLLEQNLLRVVEPFSRVEVSHIAELIGLSTVQVEGKLSQMILDKIFYGILDQGSGCLIVYDEPQQDKTYEAALEVIKNMGTVVDLLIENKASALL.

Residues 221-390 (DFKTAYSYFY…GCLIVYDEPQ (170 aa)) enclose the PCI domain.

Belongs to the proteasome subunit S9 family. Component of the lid subcomplex of the 19S proteasome regulatory particle complex (also named PA700 complex). The 26S proteasome consists of a 20S proteasome core and two 19S regulatory subunits.

Its function is as follows. Component of the lid subcomplex of the 26S proteasome, a multiprotein complex involved in the ATP-dependent degradation of ubiquitinated proteins. In the complex, rpn6 is required for proteasome assembly. The chain is Probable 26S proteasome regulatory subunit rpn6 (rpn6) from Schizosaccharomyces pombe (strain 972 / ATCC 24843) (Fission yeast).